The following is a 143-amino-acid chain: Large ribosomal subunit protein uL16 (143 aa).

Positions 1 to 17 are enriched in basic residues; it reads MLQPKKTKFRRSQKGRM. Residues 1–25 form a disordered region; the sequence is MLQPKKTKFRRSQKGRMKGNAQRGN.

It belongs to the universal ribosomal protein uL16 family. Part of the 50S ribosomal subunit.

Binds 23S rRNA and is also seen to make contacts with the A and possibly P site tRNAs. In Azobacteroides pseudotrichonymphae genomovar. CFP2, this protein is Large ribosomal subunit protein uL16.